We begin with the raw amino-acid sequence, 197 residues long: Protein jagunal (197 aa).

Residues 1–39 (MATRGGPMVAGTDGNDFEFRQRVAGTYQISLLNKSRLKY) lie on the Cytoplasmic side of the membrane. A helical transmembrane segment spans residues 40–60 (CIFFHALLFFVMLAKLTSDIL). Topologically, residues 61–78 (DRLDIFVLEIEELEVPSP) are lumenal. The helical transmembrane segment at 79–99 (LWWEYVWAGSLLTSFLGLSAA) threads the bilayer. Residues 100-109 (RGNKVREMQK) lie on the Cytoplasmic side of the membrane. A helical membrane pass occupies residues 110–130 (YMIAILVFAILPLLYCFAYYF). Topologically, residues 131–159 (SDVWEFATMDKSVELDETDIFIWRGYPYG) are lumenal. The helical transmembrane segment at 160–180 (VFWYAFCFVGFQVHGFTLYFA) threads the bilayer. The Cytoplasmic portion of the chain corresponds to 181–197 (YNLVKVWKARTATRKFQ).

Belongs to the jagunal family.

The protein localises to the endoplasmic reticulum membrane. Its function is as follows. Required for endoplasmic reticulum organization and proper vesicular traffic during vitellogenesis. Required for oocyte and bristle growth. This Drosophila pseudoobscura pseudoobscura (Fruit fly) protein is Protein jagunal.